The sequence spans 120 residues: Myohemerythrin (120 aa).

H26, H56, E60, H75, H79, H108, and D113 together coordinate Fe cation.

Belongs to the hemerythrin family. Monomer.

It localises to the cytoplasm. Functionally, myohemerythrin is an oxygen-binding protein found in the retractor muscles of certain worms. The oxygen-binding site contains two iron atoms. The sequence is that of Myohemerythrin from Theromyzon tessulatum (Duck leech).